The chain runs to 524 residues: Glycoprotein (524 aa).

The signal sequence occupies residues 1-19; sequence MVPQALLLVPILGFSSCFG. At 20–459 the chain is on the virion surface side; that stretch reads KFPIYTIPDT…DLGLPNWGEY (440 aa). 6 disulfide bridges follow: cysteine 43–cysteine 302, cysteine 54–cysteine 226, cysteine 80–cysteine 113, cysteine 178–cysteine 188, cysteine 208–cysteine 247, and cysteine 242–cysteine 271. Asparagine 56 is a glycosylation site (N-linked (GlcNAc...) asparagine; by host). Residues asparagine 266 and asparagine 338 are each glycosylated (N-linked (GlcNAc...) asparagine; by host). Cysteine 363 and cysteine 370 are oxidised to a cystine. Residues 460–480 form a helical membrane-spanning segment; sequence VLLSAGTLIALMLIIFLMTCC. The S-palmitoyl cysteine; by host moiety is linked to residue cysteine 480. At 481–524 the chain is on the intravirion side; sequence RKVDRPESTQRSLRGTGRNVSVTSQSGKFIPSWESYKSGGETGL.

It belongs to the lyssavirus glycoprotein family. Homotrimer. Interacts with matrix protein. Interacts with host TRFC. Interacts with host BST2; this interaction inhibits viral budding by tethering new virions to the cell surface. Interacts with ITGB1. Interacts with host GRM2. Glycosylated and palmitoylated by host. Glycosylation is crucial for glycoprotein export at the cell surface.

It is found in the virion membrane. Its function is as follows. Attaches the virus to host cellular receptor, inducing endocytosis of the virion by using different host proteins including TFRC, GRM2 and ITGB1. In the endosome, the acidic pH induces conformational changes in the glycoprotein trimer, which trigger fusion between virus and cell membrane. There is convincing in vitro evidence that the muscular form of the nicotinic acetylcholine receptor (nAChR), the neuronal cell adhesion molecule (NCAM), and the p75 neurotrophin receptor (p75NTR) bind glycoprotein and thereby facilitate rabies virus entry into cells. This chain is Glycoprotein (G), found in Rabies virus (strain Nishigahara RCEH) (RABV).